We begin with the raw amino-acid sequence, 509 residues long: Maturase K (509 aa).

The protein belongs to the intron maturase 2 family. MatK subfamily.

The protein localises to the plastid. Its subcellular location is the chloroplast. Its function is as follows. Usually encoded in the trnK tRNA gene intron. Probably assists in splicing its own and other chloroplast group II introns. This chain is Maturase K, found in Nicotiana glauca (Glaucous tobacco).